A 369-amino-acid chain; its full sequence is MKRNILAVVIPALLVAGTANAAEIFNKDGNKLDLYGKVDVRHQFADKRSSEDGDDSYARIGIKGETQISDQLTGFGRWEYNVKAKGTEAAVAESSTRLAFAGLKFANYGSLDYGRNYGVNYDVNAWTDVLPIFGGDAMAQTDNFMTGRSTGLLTYRNTDFFGLVDGLNFALQYQGQNSDRTKNKGRDTERSNGDGYGLSSTYDVGYGITVGGSYANSARTADQKEKVSDAYGKRAEAWNIGAKYDANNVYLAAMYGETRNMTRYTRTIADTDATLIANKTQNIELTAQYLFSDLGLKPSLAYVQSKGKDLTEGKGFNGDLVKYVSVGTYYYFNKNLSTYVDYKINLLKKDNELGVNARNVFGVGLTYQF.

Residues 1–21 form the signal peptide; sequence MKRNILAVVIPALLVAGTANA. Residues 22 to 27 traverse the membrane as a beta stranded segment; sequence AEIFNK. Residue Asp-28 is a topological domain, periplasmic. The beta stranded transmembrane segment at 29–44 threads the bilayer; it reads GNKLDLYGKVDVRHQF. At 45-55 the chain is on the extracellular side; that stretch reads ADKRSSEDGDD. A beta stranded transmembrane segment spans residues 56–68; the sequence is SYARIGIKGETQI. The Periplasmic segment spans residues 69-70; that stretch reads SD. Residues 71 to 83 form a beta stranded membrane-spanning segment; the sequence is QLTGFGRWEYNVK. The Extracellular portion of the chain corresponds to 84-97; the sequence is AKGTEAAVAESSTR. A beta stranded membrane pass occupies residues 98–106; sequence LAFAGLKFA. At 107-108 the chain is on the periplasmic side; the sequence is NY. The chain crosses the membrane as a beta stranded span at residues 109–115; it reads GSLDYGR. The Extracellular segment spans residues 116–150; the sequence is NYGVNYDVNAWTDVLPIFGGDAMAQTDNFMTGRST. A beta stranded membrane pass occupies residues 151 to 157; sequence GLLTYRN. At 158 to 165 the chain is on the periplasmic side; that stretch reads TDFFGLVD. The beta stranded transmembrane segment at 166 to 177 threads the bilayer; sequence GLNFALQYQGQN. The Extracellular segment spans residues 178–193; that stretch reads SDRTKNKGRDTERSNG. Residues 194–204 traverse the membrane as a beta stranded segment; sequence DGYGLSSTYDV. The Periplasmic segment spans residues 205-206; that stretch reads GY. The beta stranded transmembrane segment at 207 to 219 threads the bilayer; the sequence is GITVGGSYANSAR. Topologically, residues 220-234 are extracellular; sequence TADQKEKVSDAYGKR. A beta stranded membrane pass occupies residues 235–246; sequence AEAWNIGAKYDA. Position 247 (Asn-247) is a topological domain, periplasmic. Residues 248-259 form a beta stranded membrane-spanning segment; it reads NVYLAAMYGETR. At 260 to 278 the chain is on the extracellular side; the sequence is NMTRYTRTIADTDATLIAN. The chain crosses the membrane as a beta stranded span at residues 279 to 291; the sequence is KTQNIELTAQYLF. Residues 292–294 lie on the Periplasmic side of the membrane; sequence SDL. The chain crosses the membrane as a beta stranded span at residues 295–308; sequence GLKPSLAYVQSKGK. The Extracellular portion of the chain corresponds to 309–320; sequence DLTEGKGFNGDL. Residues 321–332 traverse the membrane as a beta stranded segment; that stretch reads VKYVSVGTYYYF. The Periplasmic segment spans residues 333–334; that stretch reads NK. Residues 335–344 traverse the membrane as a beta stranded segment; it reads NLSTYVDYKI. The Extracellular segment spans residues 345–359; that stretch reads NLLKKDNELGVNARN. A beta stranded membrane pass occupies residues 360–369; that stretch reads VFGVGLTYQF.

It belongs to the Gram-negative porin family. As to quaternary structure, homotrimer.

It localises to the cell outer membrane. Forms pores that allow passive diffusion of small molecules across the outer membrane. The sequence is that of Outer membrane porin F (ompF) from Xenorhabdus nematophila (strain ATCC 19061 / DSM 3370 / CCUG 14189 / LMG 1036 / NCIMB 9965 / AN6).